A 151-amino-acid polypeptide reads, in one-letter code: Ribosome maturation factor RimP (151 aa).

Belongs to the RimP family.

The protein localises to the cytoplasm. In terms of biological role, required for maturation of 30S ribosomal subunits. This Shewanella piezotolerans (strain WP3 / JCM 13877) protein is Ribosome maturation factor RimP.